The chain runs to 357 residues: DNA integrity scanning protein DisA (357 aa).

One can recognise a DAC domain in the interval 8–146; the sequence is VKSMINILQL…GNLRYTLKDI (139 aa). Residues Gly75, Leu93, and 106 to 110 contribute to the ATP site; that span reads MRHRT.

It belongs to the DisA family. In terms of assembly, homooctamer. The cofactor is Mg(2+).

It catalyses the reaction 2 ATP = 3',3'-c-di-AMP + 2 diphosphate. In terms of biological role, participates in a DNA-damage check-point that is active prior to asymmetric division when DNA is damaged. DisA forms globular foci that rapidly scan along the chromosomes during sporulation, searching for lesions. When a lesion is present, DisA pauses at the lesion site. This triggers a cellular response that culminates in a temporary block in sporulation initiation. Also has diadenylate cyclase activity, catalyzing the condensation of 2 ATP molecules into cyclic di-AMP (c-di-AMP). c-di-AMP acts as a signaling molecule that couples DNA integrity with progression of sporulation. The rise in c-di-AMP level generated by DisA while scanning the chromosome, operates as a positive signal that advances sporulation; upon encountering a lesion, the DisA focus arrests at the damaged site and halts c-di-AMP synthesis. In Bacillus cereus (strain G9842), this protein is DNA integrity scanning protein DisA.